Reading from the N-terminus, the 444-residue chain is C4-dicarboxylate transport protein 1 (444 aa).

The next 9 helical transmembrane spans lie at 9–29, 42–62, 78–98, 152–172, 190–210, 221–241, 307–327, 354–374, and 380–400; these read SIFL…VGIP, FIKL…VNGI, SVIY…VVAY, ILQV…VGEQ, IMGM…AFTT, LGAL…AVLG, FSIY…TPLA, VILA…LVLV, and FMGI…TVTI.

It belongs to the dicarboxylate/amino acid:cation symporter (DAACS) (TC 2.A.23) family.

It localises to the cell inner membrane. In terms of biological role, responsible for the transport of dicarboxylates such as succinate, fumarate, and malate from the periplasm across the membrane. In Pseudomonas paraeruginosa (strain DSM 24068 / PA7) (Pseudomonas aeruginosa (strain PA7)), this protein is C4-dicarboxylate transport protein 1.